The primary structure comprises 442 residues: GPI mannosyltransferase 1 (442 aa).

8 consecutive transmembrane segments (helical) span residues 22–42, 95–115, 177–197, 242–262, 307–327, 336–356, 361–381, and 408–428; these read INLT…LIVF, ILIH…IIAY, LASI…IYSI, AFTF…IFLF, MIVA…ITLV, LLLE…QYFI, ILPL…ILFA, and IWVA…KLIL.

Belongs to the PIGM family.

The protein localises to the endoplasmic reticulum membrane. It functions in the pathway glycolipid biosynthesis; glycosylphosphatidylinositol-anchor biosynthesis. Mannosyltransferase involved in glycosylphosphatidylinositol-anchor biosynthesis. Transfers the first alpha-1,4-mannose to GlcN-acyl-PI during GPI precursor assembly. In Dictyostelium discoideum (Social amoeba), this protein is GPI mannosyltransferase 1 (pigm).